Reading from the N-terminus, the 261-residue chain is Probable septum site-determining protein MinC (261 aa).

The disordered stretch occupies residues 106–145; sequence RAPAAKPADEAEPAAVPAVETAAAPAAAAAPEQPSEPAPT. Positions 118–144 are enriched in low complexity; that stretch reads PAAVPAVETAAAPAAAAAPEQPSEPAP.

This sequence belongs to the MinC family. In terms of assembly, interacts with MinD and FtsZ.

Cell division inhibitor that blocks the formation of polar Z ring septums. Rapidly oscillates between the poles of the cell to destabilize FtsZ filaments that have formed before they mature into polar Z rings. Prevents FtsZ polymerization. This chain is Probable septum site-determining protein MinC, found in Burkholderia orbicola (strain AU 1054).